A 435-amino-acid polypeptide reads, in one-letter code: 3-phosphoshikimate 1-carboxyvinyltransferase (435 aa).

Positions 22, 23, and 27 each coordinate 3-phosphoshikimate. Position 22 (lysine 22) interacts with phosphoenolpyruvate. Residues glycine 94 and arginine 122 each contribute to the phosphoenolpyruvate site. 4 residues coordinate 3-phosphoshikimate: serine 166, glutamine 168, aspartate 314, and lysine 341. Glutamine 168 contributes to the phosphoenolpyruvate binding site. The Proton acceptor role is filled by aspartate 314. Residues arginine 345 and arginine 388 each contribute to the phosphoenolpyruvate site.

It belongs to the EPSP synthase family. In terms of assembly, monomer.

The protein localises to the cytoplasm. The catalysed reaction is 3-phosphoshikimate + phosphoenolpyruvate = 5-O-(1-carboxyvinyl)-3-phosphoshikimate + phosphate. The protein operates within metabolic intermediate biosynthesis; chorismate biosynthesis; chorismate from D-erythrose 4-phosphate and phosphoenolpyruvate: step 6/7. Catalyzes the transfer of the enolpyruvyl moiety of phosphoenolpyruvate (PEP) to the 5-hydroxyl of shikimate-3-phosphate (S3P) to produce enolpyruvyl shikimate-3-phosphate and inorganic phosphate. The chain is 3-phosphoshikimate 1-carboxyvinyltransferase from Ruthia magnifica subsp. Calyptogena magnifica.